A 367-amino-acid chain; its full sequence is Testis-specific serine/threonine-protein kinase 1 (367 aa).

Residues 12–272 (YLLGINLGEG…IDEILSHCWM (261 aa)) form the Protein kinase domain. Residues 18–26 (LGEGSYAKV) and Lys-41 contribute to the ATP site. Asp-136 acts as the Proton acceptor in catalysis. Thr-174 is modified (phosphothreonine). The tract at residues 276–367 (ARGSPSVAIN…PQQPPETRAQ (92 aa)) is disordered. Residues 303 to 314 (GSDKKSATKLEP) show a composition bias toward basic and acidic residues.

It belongs to the protein kinase superfamily. CAMK Ser/Thr protein kinase family. In terms of assembly, interacts with TSSK2. Interacts with HSP90; this interaction stabilizes TSSK1. It depends on Mg(2+) as a cofactor. Post-translationally, autophosphorylated. Ubiquitinated; HSP90 activity negatively regulates ubiquitination and degradation. In terms of tissue distribution, testis-specific. Present in sperm (at protein level).

The protein localises to the cytoplasm. The protein resides in the cytoplasmic vesicle. It is found in the secretory vesicle. Its subcellular location is the acrosome. It localises to the cell projection. The protein localises to the cilium. The protein resides in the flagellum. It carries out the reaction L-seryl-[protein] + ATP = O-phospho-L-seryl-[protein] + ADP + H(+). It catalyses the reaction L-threonyl-[protein] + ATP = O-phospho-L-threonyl-[protein] + ADP + H(+). With respect to regulation, kinase activity is specifically inhibited by 2 classes of compounds: biphenyl compounds (1,1'-(biphenyl-4,4'-diyl)bis(2,2-dihydroxyethanone)) and 1,2,7-trialky-1H-imidazo[4,5-g]quinoxalin-6-one. Activated by phosphorylation on Thr-174 and potentially by autophosphorylation. Testis-specific serine/threonine-protein kinase required during spermatid development. Phosphorylates 'Ser-288' of TSKS. Involved in the late stages of spermatogenesis, during the reconstruction of the cytoplasm. During spermatogenesis, required for the transformation of a ring-shaped structure around the base of the flagellum originating from the chromatoid body. This chain is Testis-specific serine/threonine-protein kinase 1 (TSSK1B), found in Homo sapiens (Human).